We begin with the raw amino-acid sequence, 82 residues long: MGRRKSKRKPPPKRKAIEPLDQQFNCPFCNHEKSCEVKMDRAKNTAMIQCTVCLEDFHTTTNVLSEPIDVYNDWVDACESAN.

4 residues coordinate Zn(2+): C26, C29, C50, and C53.

Belongs to the ELOF1 family.

The protein resides in the nucleus. Functionally, transcription elongation factor implicated in the maintenance of proper chromatin structure in actively transcribed regions. In Manduca sexta (Tobacco hawkmoth), this protein is Transcription elongation factor 1 homolog.